The sequence spans 389 residues: Succinate--CoA ligase [ADP-forming] subunit beta (389 aa).

In terms of domain architecture, ATP-grasp spans 9–244; the sequence is KKLFADYGLP…LTQEDPREAE (236 aa). Residues Lys-46, 53–55, Glu-99, Ala-102, and Glu-107 contribute to the ATP site; that span reads GRG. Mg(2+) is bound by residues Asn-199 and Asp-213. Residues Asn-264 and 321–323 each bind substrate; that span reads GIV.

Belongs to the succinate/malate CoA ligase beta subunit family. Heterotetramer of two alpha and two beta subunits. It depends on Mg(2+) as a cofactor.

The catalysed reaction is succinate + ATP + CoA = succinyl-CoA + ADP + phosphate. The enzyme catalyses GTP + succinate + CoA = succinyl-CoA + GDP + phosphate. It functions in the pathway carbohydrate metabolism; tricarboxylic acid cycle; succinate from succinyl-CoA (ligase route): step 1/1. Its function is as follows. Succinyl-CoA synthetase functions in the citric acid cycle (TCA), coupling the hydrolysis of succinyl-CoA to the synthesis of either ATP or GTP and thus represents the only step of substrate-level phosphorylation in the TCA. The beta subunit provides nucleotide specificity of the enzyme and binds the substrate succinate, while the binding sites for coenzyme A and phosphate are found in the alpha subunit. The polypeptide is Succinate--CoA ligase [ADP-forming] subunit beta (Histophilus somni (strain 2336) (Haemophilus somnus)).